The chain runs to 587 residues: Arginine--tRNA ligase (587 aa).

The short motif at 127–137 (PNLAKEMHVGH) is the 'HIGH' region element.

The protein belongs to the class-I aminoacyl-tRNA synthetase family. In terms of assembly, monomer.

The protein resides in the cytoplasm. It catalyses the reaction tRNA(Arg) + L-arginine + ATP = L-arginyl-tRNA(Arg) + AMP + diphosphate. This Pseudomonas aeruginosa (strain LESB58) protein is Arginine--tRNA ligase.